A 571-amino-acid chain; its full sequence is Proline--tRNA ligase (571 aa).

It belongs to the class-II aminoacyl-tRNA synthetase family. ProS type 1 subfamily. Homodimer.

It is found in the cytoplasm. It carries out the reaction tRNA(Pro) + L-proline + ATP = L-prolyl-tRNA(Pro) + AMP + diphosphate. Catalyzes the attachment of proline to tRNA(Pro) in a two-step reaction: proline is first activated by ATP to form Pro-AMP and then transferred to the acceptor end of tRNA(Pro). As ProRS can inadvertently accommodate and process non-cognate amino acids such as alanine and cysteine, to avoid such errors it has two additional distinct editing activities against alanine. One activity is designated as 'pretransfer' editing and involves the tRNA(Pro)-independent hydrolysis of activated Ala-AMP. The other activity is designated 'posttransfer' editing and involves deacylation of mischarged Ala-tRNA(Pro). The misacylated Cys-tRNA(Pro) is not edited by ProRS. In Vibrio vulnificus (strain YJ016), this protein is Proline--tRNA ligase.